The primary structure comprises 335 residues: DDRGK domain-containing protein 1 (335 aa).

Residues 1 to 6 (MGDTYS) lie on the Lumenal side of the membrane. A helical membrane pass occupies residues 7–27 (LVLVAGYLSIFLFIGAIGYFY). Residues 28–335 (LSKPRIPSSN…NNDQDPVDTN (308 aa)) are Cytoplasmic-facing. Residues 37–124 (NVNEQQQQQQ…GEDIGVVAPG (88 aa)) are disordered. 2 stretches are compositionally biased toward low complexity: residues 41–56 (QQQQ…QQPQ) and 91–103 (SSGS…TNSD). Positions 104–117 (NYDDDNGQEGEGED) are enriched in acidic residues.

The protein belongs to the DDRGK1 family.

It is found in the endoplasmic reticulum membrane. In terms of biological role, substrate adapter for ufmylation, the covalent attachment of the ubiquitin-like modifier UFM1 to substrate proteins. This Dictyostelium discoideum (Social amoeba) protein is DDRGK domain-containing protein 1.